We begin with the raw amino-acid sequence, 333 residues long: Phosphate acyltransferase (333 aa).

Belongs to the PlsX family. Homodimer. Probably interacts with PlsY.

It localises to the cytoplasm. It catalyses the reaction a fatty acyl-[ACP] + phosphate = an acyl phosphate + holo-[ACP]. The protein operates within lipid metabolism; phospholipid metabolism. Catalyzes the reversible formation of acyl-phosphate (acyl-PO(4)) from acyl-[acyl-carrier-protein] (acyl-ACP). This enzyme utilizes acyl-ACP as fatty acyl donor, but not acyl-CoA. This is Phosphate acyltransferase from Thermosipho melanesiensis (strain DSM 12029 / CIP 104789 / BI429).